The primary structure comprises 384 residues: S-adenosylmethionine synthase (384 aa).

H15 provides a ligand contact to ATP. D17 lines the Mg(2+) pocket. E43 contributes to the K(+) binding site. L-methionine contacts are provided by E56 and Q99. A flexible loop region spans residues 99–109 (QSPDINQGVDR). Residues 164–166 (DAK), 230–231 (RF), D239, 245–246 (RK), A262, and K266 each bind ATP. D239 is an L-methionine binding site. K270 serves as a coordination point for L-methionine.

The protein belongs to the AdoMet synthase family. Homotetramer; dimer of dimers. It depends on Mg(2+) as a cofactor. The cofactor is K(+).

Its subcellular location is the cytoplasm. It catalyses the reaction L-methionine + ATP + H2O = S-adenosyl-L-methionine + phosphate + diphosphate. Its pathway is amino-acid biosynthesis; S-adenosyl-L-methionine biosynthesis; S-adenosyl-L-methionine from L-methionine: step 1/1. Functionally, catalyzes the formation of S-adenosylmethionine (AdoMet) from methionine and ATP. The overall synthetic reaction is composed of two sequential steps, AdoMet formation and the subsequent tripolyphosphate hydrolysis which occurs prior to release of AdoMet from the enzyme. This Photobacterium profundum (strain SS9) protein is S-adenosylmethionine synthase.